Here is a 323-residue protein sequence, read N- to C-terminus: Acetyl esterase (323 aa).

An Involved in the stabilization of the negatively charged intermediate by the formation of the oxyanion hole motif is present at residues 91–93 (HGG). Catalysis depends on residues Ser-165, Asp-262, and His-292.

This sequence belongs to the 'GDXG' lipolytic enzyme family. In terms of assembly, homodimer. Interacts with MalT and MelA.

The protein localises to the cytoplasm. Functionally, displays esterase activity towards short chain fatty esters (acyl chain length of up to 8 carbons). Able to hydrolyze triacetylglycerol (triacetin) and tributyrylglycerol (tributyrin), but not trioleylglycerol (triolein) or cholesterol oleate. Negatively regulates MalT activity by antagonizing maltotriose binding. Inhibits MelA galactosidase activity. The sequence is that of Acetyl esterase from Salmonella paratyphi A (strain AKU_12601).